The sequence spans 465 residues: ATP synthase subunit beta (465 aa).

An ATP-binding site is contributed by 148–155 (GGAGVGKT).

It belongs to the ATPase alpha/beta chains family. In terms of assembly, F-type ATPases have 2 components, CF(1) - the catalytic core - and CF(0) - the membrane proton channel. CF(1) has five subunits: alpha(3), beta(3), gamma(1), delta(1), epsilon(1). CF(0) has three main subunits: a(1), b(2) and c(9-12). The alpha and beta chains form an alternating ring which encloses part of the gamma chain. CF(1) is attached to CF(0) by a central stalk formed by the gamma and epsilon chains, while a peripheral stalk is formed by the delta and b chains.

It localises to the cell inner membrane. It carries out the reaction ATP + H2O + 4 H(+)(in) = ADP + phosphate + 5 H(+)(out). Functionally, produces ATP from ADP in the presence of a proton gradient across the membrane. The catalytic sites are hosted primarily by the beta subunits. This Neisseria meningitidis serogroup C (strain 053442) protein is ATP synthase subunit beta.